A 412-amino-acid polypeptide reads, in one-letter code: Cysteate synthase (412 aa).

K105 carries the N6-(pyridoxal phosphate)lysine modification. N131 and T382 together coordinate pyridoxal 5'-phosphate.

Belongs to the threonine synthase family. Cysteate synthase subfamily. In terms of assembly, homotrimer. Pyridoxal 5'-phosphate is required as a cofactor.

The enzyme catalyses O-phospho-L-serine + sulfite + H(+) = L-cysteate + phosphate. It participates in cofactor biosynthesis; coenzyme M biosynthesis. Its function is as follows. Specifically catalyzes the beta-elimination of phosphate from L-phosphoserine and the beta-addition of sulfite to the dehydroalanine intermediate to produce L-cysteate. The protein is Cysteate synthase of Methanocorpusculum labreanum (strain ATCC 43576 / DSM 4855 / Z).